The chain runs to 367 residues: Chorismate synthase (367 aa).

Residues Arg48 and Arg54 each coordinate NADP(+). FMN-binding positions include 125–127, 238–239, Gly278, 293–297, and Arg319; these read RSS, NA, and KPTSS.

This sequence belongs to the chorismate synthase family. Homotetramer. The cofactor is FMNH2.

It catalyses the reaction 5-O-(1-carboxyvinyl)-3-phosphoshikimate = chorismate + phosphate. The protein operates within metabolic intermediate biosynthesis; chorismate biosynthesis; chorismate from D-erythrose 4-phosphate and phosphoenolpyruvate: step 7/7. Its function is as follows. Catalyzes the anti-1,4-elimination of the C-3 phosphate and the C-6 proR hydrogen from 5-enolpyruvylshikimate-3-phosphate (EPSP) to yield chorismate, which is the branch point compound that serves as the starting substrate for the three terminal pathways of aromatic amino acid biosynthesis. This reaction introduces a second double bond into the aromatic ring system. This chain is Chorismate synthase, found in Xanthomonas campestris pv. campestris (strain B100).